We begin with the raw amino-acid sequence, 354 residues long: Clavesin-1 (354 aa).

Positions 118-279 (IKRALIDGFP…EFGGTLPPYD (162 aa)) constitute a CRAL-TRIO domain. Residues 333 to 354 (AGTLKHEEKGENENTQPLLALD) are disordered. Basic and acidic residues predominate over residues 335–344 (TLKHEEKGEN). Polar residues predominate over residues 345 to 354 (ENTQPLLALD).

As to quaternary structure, forms a complex with clathrin heavy chain and gamma-adaptin.

The protein localises to the golgi apparatus. The protein resides in the trans-Golgi network membrane. It localises to the early endosome membrane. Its subcellular location is the cytoplasmic vesicle. It is found in the clathrin-coated vesicle. Functionally, required for normal morphology of late endosomes and/or lysosomes in neurons. Binds phosphatidylinositol 3,5-bisphosphate (PtdIns(3,5)P2). The protein is Clavesin-1 (CLVS1) of Pongo abelii (Sumatran orangutan).